We begin with the raw amino-acid sequence, 332 residues long: MATIKSELIKNFAEEEAIHHNKISIVGTGSVGVACAISILLKGLSDELVLVDVDEGKLKGETMDLQHGSPFMKMPNIVSSKDYLVTANSNLVIITAGARQKKGETRLDLVQRNVSIFKLMIPNITQYSPHCKLLIVTNPVDILTYVAWKLSGFPKNRVIGSGCNLDSARFRYFIGQRLGIHSESCHGLILGEHGDSSVPVWSGVNIAGVPLKDLNPDIGTDKDPEQWENVHKKVISSGYEMVKMKGYTSWGISLSVADLTESILKNLRRVHPVSTLSKGLYGINEDIFLSVPCILGENGITDLIKVKLTLEEEACLQKSAETLWEIQKELKL.

Ala-2 carries the N-acetylalanine modification. Lys-5 and Lys-57 each carry N6-acetyllysine; alternate. Lys-5 is modified (N6-succinyllysine; alternate). Residue Gly-29–Lys-57 participates in NAD(+) binding. Lys-57 participates in a covalent cross-link: Glycyl lysine isopeptide (Lys-Gly) (interchain with G-Cter in SUMO2); alternate. Residue Lys-81 is modified to N6-acetyllysine. Arg-99 lines the NAD(+) pocket. Position 106 (Arg-106) interacts with substrate. Lys-118 bears the N6-acetyllysine; alternate mark. Lys-118 carries the N6-succinyllysine; alternate modification. Asn-138 contributes to the NAD(+) binding site. Positions 138 and 169 each coordinate substrate. The active-site Proton acceptor is His-193. Position 232 is an N6-acetyllysine (Lys-232). Tyr-239 bears the Phosphotyrosine mark. Position 243 is an N6-acetyllysine (Lys-243). Thr-248 provides a ligand contact to substrate. The residue at position 309 (Thr-309) is a Phosphothreonine. Lys-318 carries the N6-acetyllysine; alternate modification. Lys-318 is subject to N6-succinyllysine; alternate. Phosphothreonine is present on Thr-322.

The protein belongs to the LDH/MDH superfamily. LDH family. Testis-specific.

Its subcellular location is the cytoplasm. It catalyses the reaction (S)-lactate + NAD(+) = pyruvate + NADH + H(+). It functions in the pathway fermentation; pyruvate fermentation to lactate; (S)-lactate from pyruvate: step 1/1. Functionally, catalyzes the interconversion of L-lactate and pyruvate with nicotinamide adenine dinucleotide NAD(+) as a coenzyme. Significantly increases the transcriptional activity of JUN, when overexpressed. The protein is L-lactate dehydrogenase A-like 6A (LDHAL6A) of Homo sapiens (Human).